We begin with the raw amino-acid sequence, 75 residues long: Putative membrane protein insertion efficiency factor (75 aa).

Belongs to the UPF0161 family.

The protein resides in the cell membrane. In terms of biological role, could be involved in insertion of integral membrane proteins into the membrane. The sequence is that of Putative membrane protein insertion efficiency factor from Bacillus cytotoxicus (strain DSM 22905 / CIP 110041 / 391-98 / NVH 391-98).